The sequence spans 253 residues: Fatty acid elongase 5 (253 aa).

A run of 7 helical transmembrane segments spans residues 24–44 (IFVS…LVII), 60–80 (IMMI…ISLA), 100–120 (FWIF…VLMI), 127–147 (QLSF…GLLL), 150–170 (GIGN…HFLM), 188–208 (ILTK…SLAP), and 214–234 (FALQ…ILFL). The short motif at 132-136 (HIYHH) is the HxxHH motif element. The active-site Nucleophile is the His-135.

The protein belongs to the ELO family.

The protein localises to the membrane. The enzyme catalyses an acyl-CoA + malonyl-CoA + H(+) = a 3-oxoacyl-CoA + CO2 + CoA. It participates in lipid metabolism; polyunsaturated fatty acid biosynthesis. Involved in the synthesis of fatty acids. Elongates C20 polyunsaturated fatty acids (PUFAs) with a preference for n-6 PUFAs. The polypeptide is Fatty acid elongase 5 (Trypanosoma cruzi (strain CL Brener)).